Consider the following 173-residue polypeptide: Crossover junction endodeoxyribonuclease RuvC (173 aa).

Active-site residues include Asp8, Glu67, and Asp139. Mg(2+) contacts are provided by Asp8, Glu67, and Asp139.

The protein belongs to the RuvC family. As to quaternary structure, homodimer which binds Holliday junction (HJ) DNA. The HJ becomes 2-fold symmetrical on binding to RuvC with unstacked arms; it has a different conformation from HJ DNA in complex with RuvA. In the full resolvosome a probable DNA-RuvA(4)-RuvB(12)-RuvC(2) complex forms which resolves the HJ. Mg(2+) is required as a cofactor.

The protein resides in the cytoplasm. It catalyses the reaction Endonucleolytic cleavage at a junction such as a reciprocal single-stranded crossover between two homologous DNA duplexes (Holliday junction).. Functionally, the RuvA-RuvB-RuvC complex processes Holliday junction (HJ) DNA during genetic recombination and DNA repair. Endonuclease that resolves HJ intermediates. Cleaves cruciform DNA by making single-stranded nicks across the HJ at symmetrical positions within the homologous arms, yielding a 5'-phosphate and a 3'-hydroxyl group; requires a central core of homology in the junction. The consensus cleavage sequence is 5'-(A/T)TT(C/G)-3'. Cleavage occurs on the 3'-side of the TT dinucleotide at the point of strand exchange. HJ branch migration catalyzed by RuvA-RuvB allows RuvC to scan DNA until it finds its consensus sequence, where it cleaves and resolves the cruciform DNA. The sequence is that of Crossover junction endodeoxyribonuclease RuvC from Sodalis glossinidius (strain morsitans).